A 401-amino-acid polypeptide reads, in one-letter code: Ribosomal protein uS12 methylthiotransferase RimO (401 aa).

In terms of domain architecture, MTTase N-terminal spans 1–108 (MKINFINLGC…GIELLQTPKR (108 aa)). [4Fe-4S] cluster-binding residues include Cys-10, Cys-43, Cys-72, Cys-124, Cys-128, and Cys-131. In terms of domain architecture, Radical SAM core spans 110–339 (LTTKHYAYLK…FNLSQEILEE (230 aa)).

It belongs to the methylthiotransferase family. RimO subfamily. Requires [4Fe-4S] cluster as cofactor.

The protein resides in the cytoplasm. The catalysed reaction is L-aspartate(89)-[ribosomal protein uS12]-hydrogen + (sulfur carrier)-SH + AH2 + 2 S-adenosyl-L-methionine = 3-methylsulfanyl-L-aspartate(89)-[ribosomal protein uS12]-hydrogen + (sulfur carrier)-H + 5'-deoxyadenosine + L-methionine + A + S-adenosyl-L-homocysteine + 2 H(+). Functionally, catalyzes the methylthiolation of an aspartic acid residue of ribosomal protein uS12. This is Ribosomal protein uS12 methylthiotransferase RimO from Hydrogenobaculum sp. (strain Y04AAS1).